The sequence spans 493 residues: Probable cytosol aminopeptidase (493 aa).

Positions 257 and 262 each coordinate Mn(2+). The active site involves Lys-269. Mn(2+)-binding residues include Asp-280, Asp-339, and Glu-341. Arg-343 is an active-site residue.

This sequence belongs to the peptidase M17 family. Requires Mn(2+) as cofactor.

The protein resides in the cytoplasm. It carries out the reaction Release of an N-terminal amino acid, Xaa-|-Yaa-, in which Xaa is preferably Leu, but may be other amino acids including Pro although not Arg or Lys, and Yaa may be Pro. Amino acid amides and methyl esters are also readily hydrolyzed, but rates on arylamides are exceedingly low.. The enzyme catalyses Release of an N-terminal amino acid, preferentially leucine, but not glutamic or aspartic acids.. In terms of biological role, presumably involved in the processing and regular turnover of intracellular proteins. Catalyzes the removal of unsubstituted N-terminal amino acids from various peptides. This Aquifex aeolicus (strain VF5) protein is Probable cytosol aminopeptidase (pepA).